Reading from the N-terminus, the 485-residue chain is Protein nucleotidyltransferase YdiU (485 aa).

G90, G92, R93, K113, D125, G126, R176, and R183 together coordinate ATP. D252 functions as the Proton acceptor in the catalytic mechanism. N253 and D262 together coordinate Mg(2+). D262 provides a ligand contact to ATP.

Belongs to the SELO family. The cofactor is Mg(2+). Requires Mn(2+) as cofactor.

It catalyses the reaction L-seryl-[protein] + ATP = 3-O-(5'-adenylyl)-L-seryl-[protein] + diphosphate. The catalysed reaction is L-threonyl-[protein] + ATP = 3-O-(5'-adenylyl)-L-threonyl-[protein] + diphosphate. The enzyme catalyses L-tyrosyl-[protein] + ATP = O-(5'-adenylyl)-L-tyrosyl-[protein] + diphosphate. It carries out the reaction L-histidyl-[protein] + UTP = N(tele)-(5'-uridylyl)-L-histidyl-[protein] + diphosphate. It catalyses the reaction L-seryl-[protein] + UTP = O-(5'-uridylyl)-L-seryl-[protein] + diphosphate. The catalysed reaction is L-tyrosyl-[protein] + UTP = O-(5'-uridylyl)-L-tyrosyl-[protein] + diphosphate. In terms of biological role, nucleotidyltransferase involved in the post-translational modification of proteins. It can catalyze the addition of adenosine monophosphate (AMP) or uridine monophosphate (UMP) to a protein, resulting in modifications known as AMPylation and UMPylation. In Aliivibrio fischeri (strain MJ11) (Vibrio fischeri), this protein is Protein nucleotidyltransferase YdiU.